A 66-amino-acid chain; its full sequence is QDHPVFCYLPADPGICKAHKPRFYYNPASNKCKEFFYGGCGGNANNFKTRDECHHTCVASAMGRPT.

Residue Q1 is modified to Pyrrolidone carboxylic acid. In terms of domain architecture, BPTI/Kunitz inhibitor spans 7–57 (CYLPADPGICKAHKPRFYYNPASNKCKEFFYGGCGGNANNFKTRDECHHTC). 3 disulfides stabilise this stretch: C7–C57, C16–C40, and C32–C53. The propeptide occupies 62-66 (MGRPT).

The protein belongs to the venom Kunitz-type family. As to expression, expressed by the venom gland.

The protein localises to the secreted. Functionally, serine protease inhibitor. The polypeptide is Kunitz-type serine protease inhibitor Vur-KIn (Vipera renardi (Steppe viper)).